The primary structure comprises 307 residues: Membrane protein insertase YidC 2 (307 aa).

Positions 1-23 (MKLTLNRILFSGLALSILLTLTG) are cleaved as a signal peptide. A lipid anchor (N-palmitoyl cysteine) is attached at Cys-24. The S-diacylglycerol cysteine moiety is linked to residue Cys-24. The next 5 helical transmembrane spans lie at 58–78 (LGYG…ILPL), 135–155 (LGGI…AMYF), 179–199 (VLTA…MMAV), 209–225 (TMMY…SFSL), and 231–251 (LYWL…TYLL). The tract at residues 263 to 307 (YAKNPPKAYQSTSSRKDVTPSQNMEQANLPKKIKSNRNAGKQRKR) is disordered. Residues 271 to 288 (YQSTSSRKDVTPSQNMEQ) show a composition bias toward polar residues. The span at 293–307 (KKIKSNRNAGKQRKR) shows a compositional bias: basic residues.

It belongs to the OXA1/ALB3/YidC family. Type 2 subfamily.

The protein localises to the cell membrane. Its function is as follows. Required for the insertion and/or proper folding and/or complex formation of integral membrane proteins into the membrane. Involved in integration of membrane proteins that insert both dependently and independently of the Sec translocase complex, as well as at least some lipoproteins. This Streptococcus pyogenes serotype M1 protein is Membrane protein insertase YidC 2.